A 68-amino-acid chain; its full sequence is Large ribosomal subunit protein uL29 (68 aa).

This sequence belongs to the universal ribosomal protein uL29 family.

This is Large ribosomal subunit protein uL29 from Roseobacter denitrificans (strain ATCC 33942 / OCh 114) (Erythrobacter sp. (strain OCh 114)).